The following is a 171-amino-acid chain: MERAQKVELVAGLKSAFAEAGVIVVTRNLGLTVAQSTVLRSKMREAGASFKVAKNKLTRIAVEGTPQAPLSDLLTGPTAIATSADPVAAAKVAVEFAKTNKKLEIVGAVMGTTLLDIAGVQALAELPSLDELRGKIVGLISAPATKIAQTIQAPAGQLARVFGAYAAKDAA.

This sequence belongs to the universal ribosomal protein uL10 family. As to quaternary structure, part of the ribosomal stalk of the 50S ribosomal subunit. The N-terminus interacts with L11 and the large rRNA to form the base of the stalk. The C-terminus forms an elongated spine to which L12 dimers bind in a sequential fashion forming a multimeric L10(L12)X complex.

Functionally, forms part of the ribosomal stalk, playing a central role in the interaction of the ribosome with GTP-bound translation factors. This is Large ribosomal subunit protein uL10 from Zymomonas mobilis subsp. mobilis (strain ATCC 31821 / ZM4 / CP4).